We begin with the raw amino-acid sequence, 143 residues long: Ribosome maturation factor RimP (143 aa).

The protein belongs to the RimP family.

The protein resides in the cytoplasm. Functionally, required for maturation of 30S ribosomal subunits. In Borrelia recurrentis (strain A1), this protein is Ribosome maturation factor RimP.